A 763-amino-acid polypeptide reads, in one-letter code: MSELLSVALFLASVLIYAWKAGRNTWWFAATLTVLGLFVILNITLYASDYFTGDGINDAVLYTLTNSLTGAGVGKYILPGIGIALALVAVFGALGWVLRRRRHHPHHVGYSLLALLLALGSVDASPAFRQITELVKSQMRDGDPDFAVYYKEPAKTIPNPKLNLVYIYGESLERTYFDNDAFPNLTPELGALKNEGLDFSHTMQLPGTDYTIAGMVASQCGIPLFAPFEGNASASVSSFFPQNICLGDILKNSGYQNYFVQGANLRFAGKDVFLKSHGFDHLYGAEELKTVVADPSYRNDWGFYDDTVLDEAWKKFEALSRSGQRFSLFTLTVDTHHPDGFISRTCNRKRYDYDGKPNQSFSAVSCSQENIAEFINKIKASPWFKDTVIVVSSDHLAMNNTAWKYLNKQDRNNLFFILRGDKPQQETLAVKRNTMDNGATVLDILGGDNFIGLGRSSLSGQSLSEVFLNVKEKVLAMKPDIIRLWNFPKEIKDFTVDRDKNMIAFSGSHFRLPLLLRVSDKRVEPLPESEYSAPLRFQLADFAPRDNFVWIDRCYKMAQLWAPALALSTDWCVSQGQLGGQQTVQHVDKAQWQGKTAFKDTMIDMERYKGNVDTLKIVDNDIRYKADSFIFNVAGAPEEVKQFSGISRPESWGRWSNAQLGDEVKIEYKAPLPKKFDLVITAKAFGDNANRPIPVRVGNEEQTLVLGHDVSTITLHFNNPTDANTLVIAPPAPVSTNEGNILGHSPRKLGIGMVEIKVVNVEG.

Helical transmembrane passes span 1-21 (MSEL…AWKA), 26-46 (WWFA…ITLY), 77-97 (ILPG…LGWV), and 108-128 (VGYS…SPAF).

The protein belongs to the OpgB family.

The protein resides in the cell inner membrane. It catalyses the reaction a phosphatidylglycerol + a membrane-derived-oligosaccharide D-glucose = a 1,2-diacyl-sn-glycerol + a membrane-derived-oligosaccharide 6-(glycerophospho)-D-glucose.. It functions in the pathway glycan metabolism; osmoregulated periplasmic glucan (OPG) biosynthesis. Functionally, transfers a phosphoglycerol residue from phosphatidylglycerol to the membrane-bound nascent glucan backbones. This Salmonella schwarzengrund (strain CVM19633) protein is Phosphoglycerol transferase I.